We begin with the raw amino-acid sequence, 275 residues long: Large ribosomal subunit protein uL2 (275 aa).

Residues 224-275 (AMNPVDHPHGGGEAKAGQGNPHPVTPWGVPTKGYKTRKNKRTQQFIVRDRRG) form a disordered region.

It belongs to the universal ribosomal protein uL2 family. In terms of assembly, part of the 50S ribosomal subunit. Forms a bridge to the 30S subunit in the 70S ribosome.

One of the primary rRNA binding proteins. Required for association of the 30S and 50S subunits to form the 70S ribosome, for tRNA binding and peptide bond formation. It has been suggested to have peptidyltransferase activity; this is somewhat controversial. Makes several contacts with the 16S rRNA in the 70S ribosome. The protein is Large ribosomal subunit protein uL2 of Xanthomonas axonopodis pv. citri (strain 306).